We begin with the raw amino-acid sequence, 43 residues long: Protein PsbN (43 aa).

A helical transmembrane segment spans residues 7–27 (IAIFISCLIVSFTGYALYTAF).

This sequence belongs to the PsbN family.

Its subcellular location is the plastid. The protein localises to the chloroplast thylakoid membrane. May play a role in photosystem I and II biogenesis. The protein is Protein PsbN of Psilotum nudum (Whisk fern).